We begin with the raw amino-acid sequence, 459 residues long: Argininosuccinate lyase (459 aa).

This sequence belongs to the lyase 1 family. Argininosuccinate lyase subfamily.

It localises to the cytoplasm. It carries out the reaction 2-(N(omega)-L-arginino)succinate = fumarate + L-arginine. It participates in amino-acid biosynthesis; L-arginine biosynthesis; L-arginine from L-ornithine and carbamoyl phosphate: step 3/3. The chain is Argininosuccinate lyase from Lactococcus lactis subsp. cremoris (strain SK11).